Consider the following 563-residue polypeptide: Inorganic phosphate transporter PT2 (563 aa).

2 disordered regions span residues 1–51 and 67–96; these read MAPR…SGEE and DGGA…PAYS. Topologically, residues 1–127 are extracellular; that stretch reads MAPRYHSAAE…NGEKQSLLVP (127 aa). The helical transmembrane segment at 128–148 threads the bilayer; sequence CLAVFSSNYNFTVTSIALFLM. Residues 149 to 168 are Cytoplasmic-facing; that stretch reads NQDPLYKDASDTVVGSSTVK. The chain crosses the membrane as a helical span at residues 169–189; the sequence is MLSYAGAIVGMCTMGYLGDLI. The Extracellular segment spans residues 190-192; the sequence is GRR. The chain crosses the membrane as a helical span at residues 193–213; it reads LAMILTLALVFIGALLSSICA. Topologically, residues 214–217 are cytoplasmic; that stretch reads WGDG. A helical transmembrane segment spans residues 218–238; sequence VTVLVIMGVCRFVLGVGSGGV. Residues 239–263 are Extracellular-facing; the sequence is YPLSAVSAAEGAGSEKSNDRSMRVS. The helical transmembrane segment at 264-284 threads the bilayer; sequence WAYSMNVPGIMFPYIVALVLW. The Cytoplasmic segment spans residues 285 to 291; the sequence is CTTHNVD. The helical transmembrane segment at 292 to 312 threads the bilayer; that stretch reads VCFRILLGFGALPALLIWLPA. At 313 to 342 the chain is on the extracellular side; it reads WRMKEDRAYVAKDFAKHLAGVFVSRSYWRQ. Residues 343–363 form a helical membrane-spanning segment; the sequence is LLGTGVCWLLYDVTAYGILLV. At 364–380 the chain is on the cytoplasmic side; that stretch reads QPEITQSIWGNSSSVTD. The helical transmembrane segment at 381–401 threads the bilayer; sequence VIWQNIILNGMGIPGCFMGIL. The Extracellular portion of the chain corresponds to 402-412; the sequence is VLKQMGVKWLQ. The chain crosses the membrane as a helical span at residues 413-433; that stretch reads FWGFVGLAVSAFLMAATVEIL. The Cytoplasmic portion of the chain corresponds to 434 to 440; that stretch reads QGKAWAQ. The chain crosses the membrane as a helical span at residues 441 to 461; the sequence is LVLLCIVNFFINWGASITTFI. Residues 462–477 are Extracellular-facing; sequence LPSLVFPPEVRSTYSG. Residues 478–498 traverse the membrane as a helical segment; sequence ISAALGKIGAVGGIYTMKAIL. Over 499–504 the chain is Cytoplasmic; sequence STGGLT. A helical transmembrane segment spans residues 505 to 525; sequence PMMICAGVPSLAAAILTWFYV. Topologically, residues 526 to 563 are extracellular; that stretch reads DPVPNTLRSSFLQCFGSLAGSCPFIDCRKFRRGSRAFE.

The protein belongs to the major facilitator superfamily. Phosphate:H(+) symporter (TC 2.A.1.9) family.

The protein localises to the cell membrane. It catalyses the reaction phosphate(in) = phosphate(out). Its function is as follows. Inorganic phosphate transporter. Activity is likely sodium-independent. Exhibits higher activity under acidic pH, implying that either the monovalent form of phosphate is the preferred substrate or the transport activity is H(+)-dependent. This is Inorganic phosphate transporter PT2 from Toxoplasma gondii (strain ATCC 50861 / VEG).